Consider the following 95-residue polypeptide: uncharacterized protein (95 aa).

Residues methionine 1–serine 12 show a composition bias toward low complexity. The segment at methionine 1–alanine 27 is disordered.

This is an uncharacterized protein from Schizosaccharomyces pombe (strain 972 / ATCC 24843) (Fission yeast).